Reading from the N-terminus, the 186-residue chain is Imidazoleglycerol-phosphate dehydratase (186 aa).

Belongs to the imidazoleglycerol-phosphate dehydratase family.

It localises to the cytoplasm. It carries out the reaction D-erythro-1-(imidazol-4-yl)glycerol 3-phosphate = 3-(imidazol-4-yl)-2-oxopropyl phosphate + H2O. It participates in amino-acid biosynthesis; L-histidine biosynthesis; L-histidine from 5-phospho-alpha-D-ribose 1-diphosphate: step 6/9. This is Imidazoleglycerol-phosphate dehydratase from Pyrobaculum aerophilum (strain ATCC 51768 / DSM 7523 / JCM 9630 / CIP 104966 / NBRC 100827 / IM2).